Here is a 519-residue protein sequence, read N- to C-terminus: U3 small nucleolar RNA-associated protein 15 homolog (519 aa).

Ala2 is modified (N-acetylalanine). WD repeat units follow at residues 36–75, 78–117, 120–159, 162–202, 204–242, 246–285, and 287–326; these read KEFG…PIKT, RFKD…PLRQ, GHTK…EILT, EHSD…SVIS, EHGQ…QLLV, NHHK…VVHS, and DYTA…KKDS. Lys249 is covalently cross-linked (Glycyl lysine isopeptide (Lys-Gly) (interchain with G-Cter in SUMO2)).

In terms of assembly, part of the small subunit (SSU) processome, composed of more than 70 proteins and the RNA chaperone small nucleolar RNA (snoRNA) U3. May be a component of the proposed t-UTP subcomplex of the ribosomal small subunit (SSU) processome containing at least UTP4, WDR43, HEATR1, UTP15, WDR75. Interacts directly with UTP4 and WDR43.

Its subcellular location is the nucleus. It localises to the nucleolus. Functionally, ribosome biogenesis factor. Involved in nucleolar processing of pre-18S ribosomal RNA. Required for optimal pre-ribosomal RNA transcription by RNA polymerase I. Part of the small subunit (SSU) processome, first precursor of the small eukaryotic ribosomal subunit. During the assembly of the SSU processome in the nucleolus, many ribosome biogenesis factors, an RNA chaperone and ribosomal proteins associate with the nascent pre-rRNA and work in concert to generate RNA folding, modifications, rearrangements and cleavage as well as targeted degradation of pre-ribosomal RNA by the RNA exosome. This chain is U3 small nucleolar RNA-associated protein 15 homolog, found in Bos taurus (Bovine).